Reading from the N-terminus, the 152-residue chain is Methylglyoxal synthase (152 aa).

The MGS-like domain occupies 1–152 (MELTTRTIAA…YDRYLQQRLK (152 aa)). Substrate contacts are provided by residues histidine 19, lysine 23, 45–48 (TGTT), and 65–66 (SG). The active-site Proton donor/acceptor is the aspartate 71. Residue histidine 98 coordinates substrate.

Belongs to the methylglyoxal synthase family.

It catalyses the reaction dihydroxyacetone phosphate = methylglyoxal + phosphate. Functionally, catalyzes the formation of methylglyoxal from dihydroxyacetone phosphate. The chain is Methylglyoxal synthase from Yersinia enterocolitica serotype O:8 / biotype 1B (strain NCTC 13174 / 8081).